A 393-amino-acid polypeptide reads, in one-letter code: Prokineticin receptor 1 (393 aa).

At 1–63 (MEITMGVMDE…NSRTFFAAKI (63 aa)) the chain is on the extracellular side. Residues Asn-11, Asn-14, and Asn-36 are each glycosylated (N-linked (GlcNAc...) asparagine). The helical transmembrane segment at 64–84 (VIGMALVGIMLVCGIGNFIFI) threads the bilayer. Over 85 to 98 (AALARYKKLRNLTN) the chain is Cytoplasmic. A helical membrane pass occupies residues 99–119 (LLIANLAISDFLVAIVCCPFE). Residues 120–145 (MDYYVVRQLSWEHGHVLCASVNYLRT) lie on the Extracellular side of the membrane. A disulfide bond links Cys-137 and Cys-217. A helical membrane pass occupies residues 146–166 (VSLYVSTNALLAIAIDRYLAI). The Cytoplasmic portion of the chain corresponds to 167-179 (VHPLRPRMKYQTA). Residues 180 to 200 (TGLIALVWVVSILVAIPSAYF) form a helical membrane-spanning segment. The Extracellular segment spans residues 201–232 (TTETVLVIVKSQEKIFCGQIWPVDQQIYYKSY). The chain crosses the membrane as a helical span at residues 233–253 (FLFIFGIEFVGPVVTMTLCYA). At 254 to 282 (RISRELWFKAVPGFQTEQIRKRLRCRRKT) the chain is on the cytoplasmic side. The helical transmembrane segment at 283–303 (VLVLMCILTAYVLCWAPFYGF) threads the bilayer. Residues 304 to 322 (AIVRDFFPTVFVKEKHYLT) are Extracellular-facing. Residues 323-343 (AFYVVECIAMSNSMINTVCFV) traverse the membrane as a helical segment. Residues 344 to 393 (TVKNNTIKYFKKIMLLHWKASYNGSKSSGDLDLKTTGVPATEEVDCIGLK) are Cytoplasmic-facing.

This sequence belongs to the G-protein coupled receptor 1 family.

It is found in the cell membrane. Receptor for prokineticin 1. Exclusively coupled to the G(q) subclass of heteromeric G proteins. Activation leads to mobilization of calcium, stimulation of phosphoinositide turnover and activation of p44/p42 mitogen-activated protein kinase. May play a role during early pregnancy. The chain is Prokineticin receptor 1 (PROKR1) from Bos taurus (Bovine).